A 308-amino-acid polypeptide reads, in one-letter code: D-alanine--D-alanine ligase (308 aa).

In terms of domain architecture, ATP-grasp spans 103 to 302 (KTVMATAGVP…FDELVQWMVE (200 aa)). 130–184 (MAPPYVIKPVADGSSVGVFIVTEDQAHPPQELFRDDWPHGEELLVEKYIAGRELT) provides a ligand contact to ATP. Positions 252, 269, and 271 each coordinate Mg(2+).

It belongs to the D-alanine--D-alanine ligase family. Mg(2+) is required as a cofactor. The cofactor is Mn(2+).

Its subcellular location is the cytoplasm. The catalysed reaction is 2 D-alanine + ATP = D-alanyl-D-alanine + ADP + phosphate + H(+). The protein operates within cell wall biogenesis; peptidoglycan biosynthesis. Functionally, cell wall formation. The protein is D-alanine--D-alanine ligase of Afipia carboxidovorans (strain ATCC 49405 / DSM 1227 / KCTC 32145 / OM5) (Oligotropha carboxidovorans).